Consider the following 328-residue polypeptide: Malate dehydrogenase (328 aa).

13–19 (GGKGQIA) contributes to the NAD(+) binding site. Substrate-binding residues include R94 and R100. NAD(+) is bound by residues N107, Q114, and 131 to 133 (VGN). Residues N133 and R164 each coordinate substrate. H189 serves as the catalytic Proton acceptor.

This sequence belongs to the LDH/MDH superfamily. MDH type 2 family.

The catalysed reaction is (S)-malate + NAD(+) = oxaloacetate + NADH + H(+). In terms of biological role, catalyzes the reversible oxidation of malate to oxaloacetate. The chain is Malate dehydrogenase from Chlamydia pneumoniae (Chlamydophila pneumoniae).